The following is a 189-amino-acid chain: Elongation factor P (189 aa).

The residue at position 34 (K34) is an N6-(3,6-diaminohexanoyl)-5-hydroxylysine.

It belongs to the elongation factor P family. In terms of processing, may be beta-lysylated on the epsilon-amino group of Lys-34 by the combined action of EpmA and EpmB, and then hydroxylated on the C5 position of the same residue by EpmC (if this protein is present). Lysylation is critical for the stimulatory effect of EF-P on peptide-bond formation. The lysylation moiety may extend toward the peptidyltransferase center and stabilize the terminal 3-CCA end of the tRNA. Hydroxylation of the C5 position on Lys-34 may allow additional potential stabilizing hydrogen-bond interactions with the P-tRNA.

The protein resides in the cytoplasm. It participates in protein biosynthesis; polypeptide chain elongation. Functionally, involved in peptide bond synthesis. Alleviates ribosome stalling that occurs when 3 or more consecutive Pro residues or the sequence PPG is present in a protein, possibly by augmenting the peptidyl transferase activity of the ribosome. Modification of Lys-34 is required for alleviation. The sequence is that of Elongation factor P from Nitrosococcus oceani (strain ATCC 19707 / BCRC 17464 / JCM 30415 / NCIMB 11848 / C-107).